The chain runs to 308 residues: Isoaspartyl peptidase/L-asparaginase (308 aa).

M1 bears the N-acetylmethionine mark. T168 (nucleophile) is an active-site residue. Residues 196–199 and 219–222 contribute to the substrate site; these read RVGD and TGHG.

It belongs to the Ntn-hydrolase family. In terms of assembly, heterodimer of an alpha and beta chain produced by autocleavage. This heterodimer may then dimerize in turn, giving rise to a heterotetramer. In terms of processing, cleaved into an alpha and beta chain by autocatalysis; this activates the enzyme. The N-terminal residue of the beta subunit is responsible for the nucleophile hydrolase activity.

Its subcellular location is the cytoplasm. It carries out the reaction L-asparagine + H2O = L-aspartate + NH4(+). The enzyme catalyses Cleavage of a beta-linked Asp residue from the N-terminus of a polypeptide.. Has both L-asparaginase and beta-aspartyl peptidase activity. May be involved in the production of L-aspartate, which can act as an excitatory neurotransmitter in some brain regions. Is highly active with L-Asp beta-methyl ester. Besides, has catalytic activity toward beta-aspartyl dipeptides and their methyl esters, including beta-L-Asp-L-Phe, beta-L-Asp-L-Phe methyl ester (aspartame), beta-L-Asp-L-Ala, beta-L-Asp-L-Leu and beta-L-Asp-L-Lys. Does not have aspartylglucosaminidase activity and is inactive toward GlcNAc-L-Asn. Likewise, has no activity toward glutamine. The polypeptide is Isoaspartyl peptidase/L-asparaginase (ASRGL1) (Macaca fascicularis (Crab-eating macaque)).